We begin with the raw amino-acid sequence, 129 residues long: MAKEPARVKKRERKNITSGVAHVNASFNNTMITITDAQGNTISWSSAGAMGFKGSRKSTPYAAQMAAEDAGKKAAEHGVKTLEVNVSGPGSGRESALRALQAAGMTITTIRDVTPIPHNGCRPPKRRRV.

This sequence belongs to the universal ribosomal protein uS11 family. As to quaternary structure, part of the 30S ribosomal subunit. Interacts with proteins S7 and S18. Binds to IF-3.

In terms of biological role, located on the platform of the 30S subunit, it bridges several disparate RNA helices of the 16S rRNA. Forms part of the Shine-Dalgarno cleft in the 70S ribosome. This is Small ribosomal subunit protein uS11 from Caulobacter sp. (strain K31).